We begin with the raw amino-acid sequence, 413 residues long: Putative competence-damage inducible protein (413 aa).

Belongs to the CinA family.

The polypeptide is Putative competence-damage inducible protein (Pediococcus pentosaceus (strain ATCC 25745 / CCUG 21536 / LMG 10740 / 183-1w)).